The chain runs to 787 residues: Pleckstrin homology domain-containing family G member 6 (787 aa).

The 193-residue stretch at 161–353 folds into the DH domain; it reads HQQEALWELL…ESFLRHINGQ (193 aa). A PH domain is found at 409 to 509; the sequence is QLLLEGPVRV…WLEKTQHAQT (101 aa). Positions 533-762 are disordered; the sequence is QGTESPSTRP…EPGNGKPRRL (230 aa). A compositionally biased stretch (low complexity) spans 535–557; it reads TESPSTRPSTPSPSPEDSQSSAE. Over residues 724–742 the composition is skewed to basic and acidic residues; that stretch reads LRPRSLREDMLREIREELA.

Interacts with MYH10. Interacts with ELMO1 and EZR (in an open conformation). Interacts with CSPP1.

It is found in the cell projection. Its subcellular location is the microvillus. It localises to the cytoplasm. The protein localises to the cytoskeleton. The protein resides in the spindle. It is found in the cleavage furrow. Functionally, guanine nucleotide exchange factor activating the small GTPase RHOA, which, in turn, induces myosin filament formation. Also activates RHOG. Does not activate RAC1, or to a much lower extent than RHOA and RHOG. Part of a functional unit, involving PLEKHG6, MYH10 and RHOA, at the cleavage furrow to advance furrow ingression during cytokinesis. In epithelial cells, required for the formation of microvilli and membrane ruffles on the apical pole. Along with EZR, required for normal macropinocytosis. This chain is Pleckstrin homology domain-containing family G member 6 (Plekhg6), found in Mus musculus (Mouse).